We begin with the raw amino-acid sequence, 221 residues long: Germin-like protein 5-1 (221 aa).

A signal peptide spans 1–25 (MARPSLPCAVVAVLLLALLPTPSTA). A disulfide bridge links C35 with C50. The Cupin type-1 domain occupies 62-210 (KGLAAAGNTN…AFQVGTKEVE (149 aa)). N71 carries N-linked (GlcNAc...) asparagine glycosylation. Residues H110, H112, E117, and H156 each coordinate Mn(2+).

The protein belongs to the germin family. In terms of assembly, oligomer (believed to be a pentamer but probably hexamer).

The protein resides in the secreted. Its subcellular location is the extracellular space. The protein localises to the apoplast. Its function is as follows. May play a role in plant defense. Probably has no oxalate oxidase activity even if the active site is conserved. The protein is Germin-like protein 5-1 of Oryza sativa subsp. japonica (Rice).